A 1397-amino-acid polypeptide reads, in one-letter code: Protein RhsC (1397 aa).

A run of 28 repeats spans residues 330 to 352, 353 to 374, 375 to 417, 418 to 438, 439 to 460, 461 to 481, 482 to 502, 503 to 525, 526 to 546, 547 to 567, 568 to 588, 589 to 609, 610 to 629, 630 to 650, 651 to 671, 672 to 691, 692 to 711, 712 to 734, 735 to 758, 808 to 828, 829 to 850, 851 to 871, 872 to 894, 895 to 930, 931 to 959, 960 to 984, 985 to 1019, and 1162 to 1186. Residues 330–1186 are 28 X approximate tandem repeats; it reads NTQVRSFTYD…LNEENPHQLQ (857 aa). The segment at 1292–1312 is disordered; it reads GGQDQRGESKGDGLWGPGKAS.

Belongs to the RHS family.

Its function is as follows. Rhs elements have a nonessential function. They may play an important role in the natural ecology of the cell. The protein is Protein RhsC (rhsC) of Escherichia coli (strain K12).